Here is a 352-residue protein sequence, read N- to C-terminus: Putative killer cell immunoglobulin-like receptor-like protein KIR3DX1 (352 aa).

An N-terminal signal peptide occupies residues 1 to 16 (MAPKLITVLCLGFCLN). Ig-like C2-type domains are found at residues 17–112 (QKIC…NSLK) and 224–311 (PSLS…VTRC). 2 disulfide bridges follow: Cys49–Cys94 and Cys244–Cys295. N-linked (GlcNAc...) asparagine glycosylation is present at Asn78.

In terms of tissue distribution, expressed in NK-cells.

Its subcellular location is the secreted. The polypeptide is Putative killer cell immunoglobulin-like receptor-like protein KIR3DX1 (KIR3DX1) (Homo sapiens (Human)).